The following is an 863-amino-acid chain: Envelope glycoprotein gp160 (863 aa).

Residues 1-31 (MRVMGIRMNYQHLWKWGIMLLGILMTCSVAE) form the signal peptide. The Extracellular portion of the chain corresponds to 32 to 691 (DLWVTVYYGV…ITKWLWYIKI (660 aa)). The cysteines at positions 53 and 73 are disulfide-linked. N-linked (GlcNAc...) asparagine; by host glycosylation is found at Asn-87, Asn-129, Asn-136, Asn-142, Asn-143, Asn-159, Asn-163, Asn-194, Asn-199, Asn-209, Asn-246, Asn-274, Asn-288, Asn-301, and Asn-307. 5 disulfides stabilise this stretch: Cys-118–Cys-217, Cys-125–Cys-208, Cys-130–Cys-160, Cys-230–Cys-259, and Cys-240–Cys-251. The tract at residues 130–159 (CTNAGGNKTTNGNNTTNQEEQMMEKGEMKN) is V1. The tract at residues 160–208 (CSFNITTVISDKKKQVHALFYRLDVVPIDDDNSANTSNTNYTNYRLINC) is V2. Positions 308–341 (CTRPDNKITRQSTPIGLGQALYTTRIKGDIRQAY) are V3. Cysteines 308 and 342 form a disulfide. Residues Asn-343, Asn-350, and Asn-365 are each glycosylated (N-linked (GlcNAc...) asparagine; by host). The CD4-binding loop stretch occupies residues 374–384 (PAGGDPEITTH). 2 disulfide bridges follow: Cys-388/Cys-452 and Cys-395/Cys-425. Residues 395–425 (CNTSRLFNSTWNSSTWNNDTLNSEGTIKLPC) are V4. 8 N-linked (GlcNAc...) asparagine; by host glycosylation sites follow: Asn-396, Asn-402, Asn-406, Asn-412, Asn-455, Asn-468, Asn-469, and Asn-472. 2 V5 regions span residues 467 to 478 (VNNSTNETFRPG) and 470 to 478 (STNETFRPG). The segment at 519-539 (AIGLGAVFLGFLGAAGSTMGA) is fusion peptide. The interval 581 to 599 (KQLQARVLAVESYLKDQQL) is immunosuppression. Cys-605 and Cys-611 form a disulfide bridge. N-linked (GlcNAc...) asparagine; by host glycans are attached at residues Asn-618, Asn-623, Asn-632, and Asn-644. A coiled-coil region spans residues 640–674 (REIDNYTGVIYSLIENSQIQQEKNEQDLLQLDKWA). The tract at residues 669 to 690 (QLDKWASLWNWFSITKWLWYIK) is MPER; binding to GalCer. A helical transmembrane segment spans residues 692-712 (FIMIVGGLIGLRIVFTVLSLV). The Cytoplasmic portion of the chain corresponds to 713–863 (NRVRQGYSPL…VRQGLERALL (151 aa)). Residues 719-722 (YSPL) carry the YXXL motif; contains endocytosis signal motif. A disordered region spans residues 729–748 (PAPRGPDRPEGIEEEGGEQG). Cys-771 carries the S-palmitoyl cysteine; by host lipid modification. The Di-leucine internalization motif motif lies at 862 to 863 (LL).

The protein belongs to the HIV-1 env protein family. In terms of assembly, the mature envelope protein (Env) consists of a homotrimer of non-covalently associated gp120-gp41 heterodimers. The resulting complex protrudes from the virus surface as a spike. There seems to be as few as 10 spikes on the average virion. Interacts with host CD4, CCR5 and CXCR4. Gp120 also interacts with the C-type lectins CD209/DC-SIGN and CLEC4M/DC-SIGNR (collectively referred to as DC-SIGN(R)). Gp120 and gp41 interact with GalCer. Gp120 interacts with host ITGA4/ITGB7 complex; on CD4+ T-cells, this interaction results in rapid activation of integrin ITGAL/LFA-1, which facilitates efficient cell-to-cell spreading of HIV-1. Gp120 interacts with cell-associated heparan sulfate; this interaction increases virus infectivity on permissive cells and may be involved in infection of CD4- cells. The mature envelope protein (Env) consists of a homotrimer of non-covalently associated gp120-gp41 heterodimers. The resulting complex protrudes from the virus surface as a spike. There seems to be as few as 10 spikes on the average virion. In terms of processing, highly glycosylated by host. The high number of glycan on the protein is reffered to as 'glycan shield' because it contributes to hide protein sequence from adaptive immune system. Post-translationally, palmitoylation of the transmembrane protein and of Env polyprotein (prior to its proteolytic cleavage) is essential for their association with host cell membrane lipid rafts. Palmitoylation is therefore required for envelope trafficking to classical lipid rafts, but not for viral replication. Specific enzymatic cleavages in vivo yield mature proteins. Envelope glycoproteins are synthesized as an inactive precursor that is heavily N-glycosylated and processed likely by host cell furin in the Golgi to yield the mature SU and TM proteins. The cleavage site between SU and TM requires the minimal sequence [KR]-X-[KR]-R. About 2 of the 9 disulfide bonds of gp41 are reduced by P4HB/PDI, following binding to CD4 receptor.

The protein resides in the virion membrane. It localises to the host cell membrane. The protein localises to the host endosome membrane. Oligomerizes in the host endoplasmic reticulum into predominantly trimers. In a second time, gp160 transits in the host Golgi, where glycosylation is completed. The precursor is then proteolytically cleaved in the trans-Golgi and thereby activated by cellular furin or furin-like proteases to produce gp120 and gp41. Its function is as follows. Attaches the virus to the host lymphoid cell by binding to the primary receptor CD4. This interaction induces a structural rearrangement creating a high affinity binding site for a chemokine coreceptor like CXCR4 and/or CCR5. Acts as a ligand for CD209/DC-SIGN and CLEC4M/DC-SIGNR, which are respectively found on dendritic cells (DCs), and on endothelial cells of liver sinusoids and lymph node sinuses. These interactions allow capture of viral particles at mucosal surfaces by these cells and subsequent transmission to permissive cells. HIV subverts the migration properties of dendritic cells to gain access to CD4+ T-cells in lymph nodes. Virus transmission to permissive T-cells occurs either in trans (without DCs infection, through viral capture and transmission), or in cis (following DCs productive infection, through the usual CD4-gp120 interaction), thereby inducing a robust infection. In trans infection, bound virions remain infectious over days and it is proposed that they are not degraded, but protected in non-lysosomal acidic organelles within the DCs close to the cell membrane thus contributing to the viral infectious potential during DCs' migration from the periphery to the lymphoid tissues. On arrival at lymphoid tissues, intact virions recycle back to DCs' cell surface allowing virus transmission to CD4+ T-cells. In terms of biological role, acts as a class I viral fusion protein. Under the current model, the protein has at least 3 conformational states: pre-fusion native state, pre-hairpin intermediate state, and post-fusion hairpin state. During fusion of viral and target intracellular membranes, the coiled coil regions (heptad repeats) assume a trimer-of-hairpins structure, positioning the fusion peptide in close proximity to the C-terminal region of the ectodomain. The formation of this structure appears to drive apposition and subsequent fusion of viral and target cell membranes. Complete fusion occurs in host cell endosomes and is dynamin-dependent, however some lipid transfer might occur at the plasma membrane. The virus undergoes clathrin-dependent internalization long before endosomal fusion, thus minimizing the surface exposure of conserved viral epitopes during fusion and reducing the efficacy of inhibitors targeting these epitopes. Membranes fusion leads to delivery of the nucleocapsid into the cytoplasm. This chain is Envelope glycoprotein gp160, found in Human immunodeficiency virus type 1 group M subtype D (isolate Z84) (HIV-1).